We begin with the raw amino-acid sequence, 200 residues long: GTP-binding protein rho5 (200 aa).

Gly-13–Thr-20 lines the GTP pocket. The Effector region signature appears at Tyr-35 to Tyr-43. Residues Asp-60–Gln-64 and Cys-118–Asp-121 each bind GTP. Residue Cys-197 is modified to Cysteine methyl ester. Cys-197 carries the S-geranylgeranyl cysteine lipid modification. Residues Ile-198–Leu-200 constitute a propeptide, removed in mature form.

This sequence belongs to the small GTPase superfamily. Rho family.

The protein resides in the cell membrane. This chain is GTP-binding protein rho5 (rho5), found in Schizosaccharomyces pombe (strain 972 / ATCC 24843) (Fission yeast).